We begin with the raw amino-acid sequence, 1096 residues long: Protein spire (1096 aa).

Disordered stretches follow at residues 1-79 (MTEH…GNGT) and 184-211 (VESQ…TSSV). Positions 37-51 (LSTSPDSANGDAQQA) are enriched in polar residues. Basic residues predominate over residues 53 to 65 (THTHIISHTHSKG). 2 stretches are compositionally biased toward low complexity: residues 66–77 (AAKTQTQTQNGN) and 189–201 (QEAS…QKQP). Residues 111–366 (VTLNNILDSF…RALATETIEL (256 aa)) enclose the KIND domain. A coiled-coil region spans residues 315-340 (KRWDDEAEEERNDTKELEHIIETCRN). 2 WH2 domains span residues 436–454 (PYEI…LRKV) and 500–517 (PREQ…LKQI). 3 disordered regions span residues 560–588 (DDSS…AHLA), 614–656 (QECQ…PSFT), and 693–762 (QSNL…LGPW). Over residues 574–585 (HQHHQQHQPHHA) the composition is skewed to basic residues. Composition is skewed to low complexity over residues 633–645 (APRQ…QAQA) and 714–725 (DAGSQSQSGASS). Over residues 737 to 754 (EGDHSQTTDGPPRLDEAH) the composition is skewed to basic and acidic residues. Residues 780-800 (LSVTLAEIVHIRSVMTKAELE) are spir-box. Residues 874-894 (PASSSTPSPSHHAHQAHSSST) show a composition bias toward low complexity. Disordered stretches follow at residues 874–899 (PASS…NIMD), 912–958 (RSES…APGH), and 997–1021 (RSME…SSTL). Polar residues predominate over residues 921 to 941 (STVGSAPSSPKHQRSNMSTPG).

It belongs to the spire family. As to quaternary structure, interacts with bsk, Rho1, Rac1, Cdc42 and wash. Interacts with capu. Post-translationally, phosphorylated by Jnk kinase (bsk).

The protein resides in the cytoplasm. It is found in the cytoskeleton. It localises to the perinuclear region. The protein localises to the cell membrane. Its subcellular location is the cytoplasmic vesicle membrane. Functionally, acts as an actin nucleation factor, remains associated with the slow-growing pointed end of the new filament. Promotes dissociation of capu from the barbed end of actin filaments. Involved in intracellular vesicle transport along actin fibers, providing a novel link between actin cytoskeleton dynamics and intracellular transport. Required for localization of determinants within the developing oocyte to the posterior pole and to the dorsal anterior corner. Links Rho family signaling and Jnk function to the actin cytoskeleton. This Drosophila pseudoobscura pseudoobscura (Fruit fly) protein is Protein spire.